The sequence spans 171 residues: HTH-type transcriptional regulator AldR (171 aa).

Over residues 1–14 (MSEGSSITGVQTPG) the composition is skewed to polar residues. Positions 1-21 (MSEGSSITGVQTPGSPKDVRA) are disordered. Positions 24 to 85 (LDDIDRRILL…DIDPAAVGLG (62 aa)) constitute an HTH asnC-type domain. The segment at residues 43 to 62 (NSALAEMVGIAPSTCHGRVR) is a DNA-binding region (H-T-H motif).

Homodimer in the absence of L-alanine. Homooctamer in the presence of L-alanine. Homotetramers in the presence of L-cysteine.

In the presence of alanine, AldR changes its quaternary structure from a homodimer to an octamer with an open-ring conformation. The binding affinity of AldR for the ald control region is increased significantly by L-alanine. In vitro, L-cysteine also increases the binding affinity of AldR for the target DNA. Functionally, transcriptional regulator that might play a role under hypoxic conditions. Regulates the expression of ald, which encodes L-alanine dehydrogenase. Serves as both an activator for ald expression in the presence of L-alanine and a repressor in the absence of L-alanine. Acts by binding directly to the upstream region of the ald gene. Four AldR-binding sites (O2, O1, O4 and O3) were identified upstream of the ald gene. O2, O1 and O4 are required for the induction of ald expression by alanine, while O3 is directly involved in the repression of ald expression, by occluding the access of RNA polymerase to the ald promoter. In addition to O3, both O1 and O4 are also necessary for full repression of ald expression in the absence of alanine. The polypeptide is HTH-type transcriptional regulator AldR (Mycolicibacterium smegmatis (strain ATCC 700084 / mc(2)155) (Mycobacterium smegmatis)).